Reading from the N-terminus, the 394-residue chain is Na(+)/H(+) antiporter NhaA (394 aa).

The next 11 helical transmembrane spans lie at 14–34 (AGGL…NSAL), 59–79 (LLLW…GLEV), 95–115 (VFPA…YLLF), 125–145 (GWAI…ALLG), 154–174 (VFLL…IALF), 179–199 (VSLQ…YMNW), 213–233 (LVLW…GVIV), 254–274 (GLHP…NAGV), 292–312 (IATG…WLAV), 328–348 (IFAV…IASL), and 363–383 (LGIL…LRLV).

This sequence belongs to the NhaA Na(+)/H(+) (TC 2.A.33) antiporter family.

The protein localises to the cell inner membrane. It catalyses the reaction Na(+)(in) + 2 H(+)(out) = Na(+)(out) + 2 H(+)(in). Functionally, na(+)/H(+) antiporter that extrudes sodium in exchange for external protons. The sequence is that of Na(+)/H(+) antiporter NhaA from Yersinia pestis bv. Antiqua (strain Antiqua).